A 370-amino-acid polypeptide reads, in one-letter code: Putative F-box/kelch-repeat protein At3g46050 (370 aa).

The F-box domain occupies Pro15–Arg61. Kelch repeat units lie at residues Lys119 to Asp165 and Ile167 to Ser212.

In Arabidopsis thaliana (Mouse-ear cress), this protein is Putative F-box/kelch-repeat protein At3g46050.